The sequence spans 283 residues: 4-diphosphocytidyl-2-C-methyl-D-erythritol kinase (283 aa).

Lysine 10 is a catalytic residue. 99 to 109 (PMGGGLGGGSS) contributes to the ATP binding site. Aspartate 141 is an active-site residue.

It belongs to the GHMP kinase family. IspE subfamily. Homodimer.

It catalyses the reaction 4-CDP-2-C-methyl-D-erythritol + ATP = 4-CDP-2-C-methyl-D-erythritol 2-phosphate + ADP + H(+). The protein operates within isoprenoid biosynthesis; isopentenyl diphosphate biosynthesis via DXP pathway; isopentenyl diphosphate from 1-deoxy-D-xylulose 5-phosphate: step 3/6. Catalyzes the phosphorylation of the position 2 hydroxy group of 4-diphosphocytidyl-2C-methyl-D-erythritol. This chain is 4-diphosphocytidyl-2-C-methyl-D-erythritol kinase, found in Salmonella arizonae (strain ATCC BAA-731 / CDC346-86 / RSK2980).